We begin with the raw amino-acid sequence, 398 residues long: Ribosomal RNA large subunit methyltransferase I (398 aa).

In terms of domain architecture, PUA spans 2–79 (SVRLVLAKGR…LSESIDIAFF (78 aa)).

It belongs to the methyltransferase superfamily. RlmI family.

Its subcellular location is the cytoplasm. The enzyme catalyses cytidine(1962) in 23S rRNA + S-adenosyl-L-methionine = 5-methylcytidine(1962) in 23S rRNA + S-adenosyl-L-homocysteine + H(+). Functionally, specifically methylates the cytosine at position 1962 (m5C1962) of 23S rRNA. This Shigella dysenteriae serotype 1 (strain Sd197) protein is Ribosomal RNA large subunit methyltransferase I.